Here is an 86-residue protein sequence, read N- to C-terminus: uncharacterized protein (86 aa).

2 TPR repeats span residues 8-41 and 42-75; these read AEYY…NPFY and RDAW…EKHL.

This is an uncharacterized protein from Methanocaldococcus jannaschii (strain ATCC 43067 / DSM 2661 / JAL-1 / JCM 10045 / NBRC 100440) (Methanococcus jannaschii).